The following is a 582-amino-acid chain: Cryptochrome-2 (582 aa).

Positions 12-141 (CRSVHWFRRG…EVVIENSHTL (130 aa)) constitute a Photolyase/cryptochrome alpha/beta domain. Residues Ser261, Gln298, His364, and 396-398 (DAD) each bind FAD. Residues 521–559 (GPVTDSAPGQGSSTSTAVRLPQSDQASPKRKHEGAEELC) are disordered. Over residues 527-546 (APGQGSSTSTAVRLPQSDQA) the composition is skewed to polar residues.

It belongs to the DNA photolyase class-1 family. Component of the circadian core oscillator, which includes the CRY proteins, CLOCK or NPAS2, BMAL1 or BMAL2, CSNK1E, and the PER proteins. FAD serves as cofactor. The cofactor is (6R)-5,10-methylene-5,6,7,8-tetrahydrofolate. In terms of tissue distribution, expressed in the pineal gland.

It localises to the cytoplasm. The protein localises to the nucleus. Functionally, transcriptional repressor which forms a core component of the circadian clock. The circadian clock, an internal time-keeping system, regulates various physiological processes through the generation of approximately 24 hour circadian rhythms in gene expression, which are translated into rhythms in metabolism and behavior. It is derived from the Latin roots 'circa' (about) and 'diem' (day) and acts as an important regulator of a wide array of physiological functions including metabolism, sleep, body temperature, blood pressure, endocrine, immune, cardiovascular, and renal function. Consists of two major components: the central clock, residing in the suprachiasmatic nucleus (SCN) of the brain, and the peripheral clocks that are present in nearly every tissue and organ system. Both the central and peripheral clocks can be reset by environmental cues, also known as Zeitgebers (German for 'timegivers'). The predominant Zeitgeber for the central clock is light, which is sensed by retina and signals directly to the SCN. The central clock entrains the peripheral clocks through neuronal and hormonal signals, body temperature and feeding-related cues, aligning all clocks with the external light/dark cycle. Circadian rhythms allow an organism to achieve temporal homeostasis with its environment at the molecular level by regulating gene expression to create a peak of protein expression once every 24 hours to control when a particular physiological process is most active with respect to the solar day. Transcription and translation of core clock components (CLOCK, NPAS2, BMAL1, BMAL2, PER1, PER2, PER3, CRY1 and CRY2) plays a critical role in rhythm generation, whereas delays imposed by post-translational modifications (PTMs) are important for determining the period (tau) of the rhythms (tau refers to the period of a rhythm and is the length, in time, of one complete cycle). A diurnal rhythm is synchronized with the day/night cycle, while the ultradian and infradian rhythms have a period shorter and longer than 24 hours, respectively. Disruptions in the circadian rhythms contribute to the pathology of cardiovascular diseases, cancer, metabolic syndromes and aging. A transcription/translation feedback loop (TTFL) forms the core of the molecular circadian clock mechanism. Transcription factors, CLOCK or NPAS2 and BMAL1 or BMAL2, form the positive limb of the feedback loop, act in the form of a heterodimer and activate the transcription of core clock genes and clock-controlled genes (involved in key metabolic processes), harboring E-box elements (5'-CACGTG-3') within their promoters. The core clock genes: PER1/2/3 and CRY1/2 which are transcriptional repressors form the negative limb of the feedback loop and interact with the CLOCK|NPAS2-BMAL1|BMAL2 heterodimer inhibiting its activity and thereby negatively regulating their own expression. This heterodimer also activates nuclear receptors NR1D1/2, RORA/B/G, which form a second feedback loop and which activate and repress BMAL1 transcription, respectively. CRY1 and CRY2 have redundant functions but also differential and selective contributions at least in defining the pace of the SCN circadian clock and its circadian transcriptional outputs. Less potent transcriptional repressor in cerebellum and liver than CRY1, though less effective in lengthening the period of the SCN oscillator. Seems to play a critical role in tuning SCN circadian period by opposing the action of CRY1. With CRY1, dispensable for circadian rhythm generation but necessary for the development of intercellular networks for rhythm synchrony. Represses CLOCK-BMAL1-mediated transcriptional activation. The chain is Cryptochrome-2 (CRY2) from Gallus gallus (Chicken).